The primary structure comprises 133 residues: ATP synthase epsilon chain (133 aa).

It belongs to the ATPase epsilon chain family. As to quaternary structure, F-type ATPases have 2 components, CF(1) - the catalytic core - and CF(0) - the membrane proton channel. CF(1) has five subunits: alpha(3), beta(3), gamma(1), delta(1), epsilon(1). CF(0) has three main subunits: a, b and c.

It is found in the cell inner membrane. In terms of biological role, produces ATP from ADP in the presence of a proton gradient across the membrane. The chain is ATP synthase epsilon chain from Desulfosudis oleivorans (strain DSM 6200 / JCM 39069 / Hxd3) (Desulfococcus oleovorans).